We begin with the raw amino-acid sequence, 974 residues long: ATP-dependent RNA helicase glh-2 (974 aa).

Residues 212 to 435 form a disordered region; it reads HESGFGGGKS…SGFGGGNDGG (224 aa). Residues 215–250 show a composition bias toward gly residues; it reads GFGGGKSGGFGGGNSGGSGFGSGGNSNGFGSGGGGQ. A compositionally biased stretch (polar residues) spans 256–267; it reads NNNCFNCQQPGH. 2 CCHC-type zinc fingers span residues 257 to 274 and 282 to 299; these read NNCF…DCPE and RVCY…DCPE. 2 stretches are compositionally biased toward basic and acidic residues: residues 268–282 and 293–307; these read RSND…REPR and NSRD…REGR. Over residues 309-364 the composition is skewed to gly residues; sequence GFTGGSSGFGGGNGGGTGFDSGLTNGFGSGNNGESGFGSGGFGGNSNGFGSGGGGQ. Polar residues predominate over residues 370–381; it reads NNNCFNCQQPGH. CCHC-type zinc fingers lie at residues 371 to 388 and 396 to 413; these read NNCF…DCPE and RVCY…DCPE. 2 stretches are compositionally biased toward basic and acidic residues: residues 382–396 and 407–421; these read RSND…REPR and NSRD…REGR. The segment covering 426–435 has biased composition (gly residues); sequence SGFGGGNDGG. 2 consecutive CCHC-type zinc fingers follow at residues 453 to 470 and 473 to 490; these read MKCF…ECPE and RGCF…ECPN. Positions 552 to 580 match the Q motif motif; it reads KTFSEANLGETMKKNVAHAGYTKTTPIQQ. In terms of domain architecture, Helicase ATP-binding spans 583-767; sequence LPLIHQGHDI…RNHLKEGYIM (185 aa). 596-603 lines the ATP pocket; the sequence is AQTGSGKT. Positions 710–713 match the DEAD box motif; that stretch reads DEAD. The region spanning 803–950 is the Helicase C-terminal domain; that stretch reads DIDSYTTEKN…LVPEWMQGAS (148 aa).

The protein belongs to the DEAD box helicase family. DDX4/VASA subfamily. In terms of assembly, interacts (via C-terminus) with kgb-1.

The catalysed reaction is ATP + H2O = ADP + phosphate + H(+). In terms of biological role, probable ATP-binding RNA helicase. The chain is ATP-dependent RNA helicase glh-2 (glh-2) from Caenorhabditis elegans.